The sequence spans 361 residues: Septin-1 (361 aa).

The Septin-type G domain occupies 32 to 304 (KGFEFTLMVV…ENYRSDRLAK (273 aa)). The interval 42 to 49 (GESGLGKS) is G1 motif. GTP is bound by residues 42–49 (GESGLGKS), Thr-76, Gly-102, 181–189 (KADCLTKKE), Gly-239, and Arg-254. Residues 99 to 102 (DTPG) form a G3 motif region. The segment at 180–183 (AKAD) is G4 motif. At Ser-319 the chain carries Phosphoserine.

It belongs to the TRAFAC class TrmE-Era-EngA-EngB-Septin-like GTPase superfamily. Septin GTPase family. In terms of assembly, likely part of a multicomponent septin complex that includes pnut. Interacts with pnut. Interacts with park. Ubiquitinated by park, leading to its degradation by the proteasome. Accumulates at the leading edge of the cleavage furrow in dividing cells and cellularizing embryos (at protein level). Also accumulates at the leading edge of the embryo epithelium during dorsal closure, in the embryonic neurons, and at the baso-lateral surfaces of ovarian follicle cells (at protein level).

It localises to the cytoplasm. In terms of biological role, involved in cytokinesis. May be involved in p53-dependent apoptosis. This chain is Septin-1, found in Drosophila melanogaster (Fruit fly).